Consider the following 401-residue polypeptide: Probable trafficking protein particle complex subunit 13 homolog (401 aa).

This sequence belongs to the TRAPPC13 family.

The sequence is that of Probable trafficking protein particle complex subunit 13 homolog from Caenorhabditis briggsae.